Reading from the N-terminus, the 609-residue chain is Putative 4-coumarate--CoA ligase-like 8 (609 aa).

6 residues coordinate ATP: serine 194, serine 195, glycine 196, threonine 197, threonine 198, and lysine 202. Residues phenylalanine 252 and serine 256 each coordinate (E)-4-coumaroyl-AMP. Arginine 274 is a CoA binding site. The tract at residues 276-348 is SBD1; it reads SVEKTMAAVE…SCFPAVNLGQ (73 aa). Residues glycine 326, glutamine 348, threonine 353, and methionine 361 each contribute to the (E)-4-coumaroyl-AMP site. ATP contacts are provided by glutamine 348 and threonine 353. The tract at residues 349–450 is SBD2; the sequence is CYGLTETTGI…VRGPSTMRGY (102 aa). Residues aspartate 482 and arginine 497 each coordinate ATP. Lysine 499 and lysine 503 together coordinate (E)-4-coumaroyl-AMP. Alanine 506 contributes to the CoA binding site. ATP is bound at residue lysine 589.

This sequence belongs to the ATP-dependent AMP-binding enzyme family. Mg(2+) serves as cofactor.

It catalyses the reaction (E)-4-coumarate + ATP + CoA = (E)-4-coumaroyl-CoA + AMP + diphosphate. The enzyme catalyses (E)-4-coumarate + ATP + H(+) = (E)-4-coumaroyl-AMP + diphosphate. The catalysed reaction is (E)-4-coumaroyl-AMP + CoA = (E)-4-coumaroyl-CoA + AMP + H(+). Its function is as follows. Carboxylate--CoA ligase that may use 4-coumarate as substrate. Follows a two-step reaction mechanism, wherein the carboxylate substrate first undergoes adenylation by ATP, followed by a thioesterification in the presence of CoA to yield the final CoA thioester. In Oryza sativa subsp. japonica (Rice), this protein is Putative 4-coumarate--CoA ligase-like 8 (4CLL8).